Here is a 433-residue protein sequence, read N- to C-terminus: 3-phosphoshikimate 1-carboxyvinyltransferase (433 aa).

3-phosphoshikimate-binding residues include lysine 22, serine 23, and arginine 27. Lysine 22 contacts phosphoenolpyruvate. Residues glycine 96 and arginine 129 each contribute to the phosphoenolpyruvate site. Serine 175, serine 176, glutamine 177, serine 203, aspartate 318, asparagine 341, and lysine 345 together coordinate 3-phosphoshikimate. Residue glutamine 177 participates in phosphoenolpyruvate binding. Catalysis depends on aspartate 318, which acts as the Proton acceptor. Residues arginine 349, arginine 393, and lysine 418 each contribute to the phosphoenolpyruvate site.

It belongs to the EPSP synthase family. In terms of assembly, monomer.

The protein resides in the cytoplasm. It catalyses the reaction 3-phosphoshikimate + phosphoenolpyruvate = 5-O-(1-carboxyvinyl)-3-phosphoshikimate + phosphate. It functions in the pathway metabolic intermediate biosynthesis; chorismate biosynthesis; chorismate from D-erythrose 4-phosphate and phosphoenolpyruvate: step 6/7. Its function is as follows. Catalyzes the transfer of the enolpyruvyl moiety of phosphoenolpyruvate (PEP) to the 5-hydroxyl of shikimate-3-phosphate (S3P) to produce enolpyruvyl shikimate-3-phosphate and inorganic phosphate. In Mannheimia succiniciproducens (strain KCTC 0769BP / MBEL55E), this protein is 3-phosphoshikimate 1-carboxyvinyltransferase.